Consider the following 496-residue polypeptide: 4-O-methyl-glucuronoyl methylesterase 1 (496 aa).

The N-terminal stretch at 1–19 is a signal peptide; the sequence is MKSTVASALLVLAGTAVQA. The 36-residue stretch at 20 to 55 folds into the CBM1 domain; it reads QSGPWQQCGGIGWQGPFTCVSGHTCQVLNDWYHQCV. Positions 57 to 151 are disordered; sequence GGGPSPPPTS…RLPDPFTFHN (95 aa). The segment covering 59-125 has biased composition (pro residues); the sequence is GPSPPPTSPP…SPPPTSPPPS (67 aa). Disulfide bonds link cysteine 129/cysteine 163, cysteine 307/cysteine 443, and cysteine 339/cysteine 415. Positions 306–311 match the GXSYXG catalytic site motif motif; sequence GCSRNG. The active-site Nucleophile is serine 308. Substrate-binding residues include lysine 312, glutamine 354, glutamate 362, and tryptophan 406. Histidine 442 acts as the Proton donor/acceptor in catalysis.

This sequence belongs to the carbohydrate esterase 15 (CE15) family.

Its subcellular location is the secreted. The catalysed reaction is a 4-O-methyl-alpha-D-glucuronosyl ester derivative + H2O = 4-O-methyl-alpha-D-glucuronate derivative + an alcohol + H(+). Functionally, glucuronoyl esterase which may play a significant role in biomass degradation, as it is considered to disconnect hemicellulose from lignin through the hydrolysis of the ester bond between 4-O-methyl-D-glucuronic acid residues of glucuronoxylans and aromatic alcohols of lignin. Cleaves native lignin-carbohydrate (LC) ester bonds from LC complex preparations of spruce (softwood) and birch (hardwood), containing mainly hemicelluloses with partially acetylated glucomannans in spruce and partially acetylated xylan in birch. Can hydrolyze benzyl glucuronic acid (BnGlcA), allyl glucuronic acid (allylGlcA) and to a lower degree methyl glucuronic acid (MeGlcA) in vitro. The chain is 4-O-methyl-glucuronoyl methylesterase 1 from Sodiomyces alcalophilus (Acremonium alcalophilum).